The following is a 247-amino-acid chain: MTAASGVRMYSKAQAQNSQEQLIQRYAPLVKRIAYHLLGRLPASVQVEDLMQAGMIGLLEAAKKYDAGKGASFETYAGIRIRGAMLDEVRKGDWAPRSVHRNTRMVTDAIRAIEARTGRDAKDHEVAAELQLSLEDYYGILSDTQGSRLYSFDDLLQDGEHGLPEDTSLSHNEPIHGLLDERFQAALADAIAKLPERERLVLALYYDEELNLKEIGEVLGVSESRVSQLHSQCAARLRARLADWRSA.

The tract at residues 22–94 (LIQRYAPLVK…MLDEVRKGDW (73 aa)) is sigma-70 factor domain-2. An Interaction with polymerase core subunit RpoC motif is present at residues 49 to 52 (DLMQ). The sigma-70 factor domain-3 stretch occupies residues 102 to 171 (NTRMVTDAIR…GLPEDTSLSH (70 aa)). Residues 190 to 238 (AIAKLPERERLVLALYYDEELNLKEIGEVLGVSESRVSQLHSQCAARLR) form a sigma-70 factor domain-4 region. The segment at residues 212 to 231 (LKEIGEVLGVSESRVSQLHS) is a DNA-binding region (H-T-H motif).

This sequence belongs to the sigma-70 factor family. FliA subfamily.

The protein localises to the cytoplasm. In terms of biological role, sigma factors are initiation factors that promote the attachment of RNA polymerase to specific initiation sites and are then released. This sigma factor controls the expression of flagella-related genes. Required for the flagellin gene (fliC) expression. The sequence is that of RNA polymerase sigma factor FliA from Pseudomonas aeruginosa (strain ATCC 15692 / DSM 22644 / CIP 104116 / JCM 14847 / LMG 12228 / 1C / PRS 101 / PAO1).